The following is a 447-amino-acid chain: MPSDHPDFRSKSARLRCQPPRTNNCGTFKQPPSVAATSRPKPGNPFLQPPTKGTPPPKKKKKNHTEGCHTHEANPEPNTKHTETEPPIISHCPPPHPGPTATPNLLPCPNPTSSFCQNTRDSPSLPPNVQTWSIFPKHPSKDVTAQVKSQSVSHRAPITYQPPRPTTTSNPRISQSYHMKSISSYLSFAHMNITHTTEQHAENQPHWKTILDIAPFVSITFPAIMCLIFDEDSFEESPFLRFITLLLPFSYSAVQYALLYTNWKSHNKPEPILHTTLYYTLSLLLLAFTIISILSIIPFSLNEWDHAASFFYPIVLPSFTVPPAYLLSSSYFLVPRQIRLTDTVISILISVCSIVNVLLVFKEFNYYPYSAIISSISVLLQLLSEKHCLFKQSPPSTASSRAAVLILTLILAVLVYTFLGYGAIYILDDHFHLLGKMKSILPSEPHQ.

2 stretches are compositionally biased toward basic and acidic residues: residues 1 to 10 (MPSDHPDFRS) and 64 to 84 (HTEG…HTET). Disordered regions lie at residues 1-103 (MPSD…TATP) and 147-173 (VKSQ…NPRI). Pro residues predominate over residues 92–103 (CPPPHPGPTATP).

It belongs to the UPF0328 family.

The chain is UPF0328 protein ECU10_1870 from Encephalitozoon cuniculi (strain GB-M1) (Microsporidian parasite).